A 425-amino-acid polypeptide reads, in one-letter code: Terminal nucleotidyltransferase 5B (425 aa).

A disordered region spans residues 1-42; it reads MMPSESGAERRDRAAAQVGTAAATAVATAAPAGGGPDPEALS. The segment covering 15–31 has biased composition (low complexity); that stretch reads AAQVGTAAATAVATAAP.

This sequence belongs to the TENT family.

It localises to the cytoplasm. The protein localises to the nucleus. It carries out the reaction RNA(n) + ATP = RNA(n)-3'-adenine ribonucleotide + diphosphate. Catalyzes the transfer of one adenosine molecule from an ATP to an mRNA poly(A) tail bearing a 3'-OH terminal group in an ATP hydrolysis-dependent manner. May be involved in maintaining the translation efficiency of at least some genes through preventing degradation of their mRNAs. Prefers RNA molecules that are adenosine-rich close to 3'-end. In addition, may inhibit cell proliferation and cell cycle progression through ubiquitination of beta-catenin/CTNNB1. The chain is Terminal nucleotidyltransferase 5B from Homo sapiens (Human).